A 955-amino-acid polypeptide reads, in one-letter code: MTRKNTTTNPWAKFHGPNLGYVIEQYDLYVTGAGSVDPELQELFEIFGAPSFQDDVVTGDNTATHFSPQNTGNIEKILKVVQLVEQIRSFGHTLAHINPMEDAANGQSLLEKAMSELSDADLKAIPAKTVWQDAPEGIHTALDVIHRLKDVYTKSLAYEFSHIQDSEERAWLHQMVESNSLRQPLSNKKRTALLKRLTAVEGFEQFLHKTFVGQKRFSIEGVDMLVPVLDEIVLEGAKNGVEDVMIGMAHRGRLSVLAHVLEKPYSHMFAEFKHAKIEGAVANSGWTGDVKYHLGREQVVSNEEVSTRVTLANNPSHLEFVNPVVEGFARAAQENRKKSGLPDQDTSKSFVILVHGDAAFPGQGIVSETLNLSRLNAYQTGGTIHVIANNAVGFTTDSYDSRSTKYSSDLAKGFDIPIVHVNADDPEACLAAANLAIQYRMLFKKDFLIDLIGYRRYGHNEMDDPAVTQPQVYKKIKNHPTVRAIYADQLQAAGVLNADEVETITQFTQEQLKSDYAQVPPADTSDATIHVKVPDVVAKGIQPIDTGVEIDSLRAINEGLLSWPEGFNVYPKVKKILERRKDALEENGKIEWALAESLAFASILQEGTPIRLTGQDSQRGTFAHRHIVLHDTDTNETYSPLHRLPNINASFSVHNSPLSEAAVVGYEYGYNVFAPETLVMWEAQYGDFSNTAQALFDQYVSAGRAKWGQKSGLVLLLPHGYEGQGPEHSSARPERFLQLAAENNWTVANLTSAAQYFHILRRQASILGTEAVRPLVLMTPKSLLRHPLTLSTASQLSEGRFQPALEQENLGMKPNKVKRLVLSTGKMAIDLAAEIESGKHEYNLDEVHVVRIEQLYPFPAEKVQSIIKRFKNLEEIIWVQEEPRNMGAWHYMAPILFELAGDKVKTGYIGRPDRSSPSGGDPFAHKAEQELIVAHALDVKYNFRQDKQEIEVYSN.

Belongs to the alpha-ketoglutarate dehydrogenase family. As to quaternary structure, homodimer. Part of the 2-oxoglutarate dehydrogenase (OGDH) complex composed of E1 (2-oxoglutarate dehydrogenase), E2 (dihydrolipoamide succinyltransferase) and E3 (dihydrolipoamide dehydrogenase); the complex contains multiple copies of the three enzymatic components (E1, E2 and E3). Requires thiamine diphosphate as cofactor.

It carries out the reaction N(6)-[(R)-lipoyl]-L-lysyl-[protein] + 2-oxoglutarate + H(+) = N(6)-[(R)-S(8)-succinyldihydrolipoyl]-L-lysyl-[protein] + CO2. Its function is as follows. E1 component of the 2-oxoglutarate dehydrogenase (OGDH) complex which catalyzes the decarboxylation of 2-oxoglutarate, the first step in the conversion of 2-oxoglutarate to succinyl-CoA and CO(2). The protein is 2-oxoglutarate dehydrogenase E1 component of Bacillus cereus (strain ATCC 14579 / DSM 31 / CCUG 7414 / JCM 2152 / NBRC 15305 / NCIMB 9373 / NCTC 2599 / NRRL B-3711).